We begin with the raw amino-acid sequence, 523 residues long: Calcium uptake protein 3, mitochondrial (523 aa).

The transit peptide at 1–6 directs the protein to the mitochondrion; the sequence is MAALRR. The segment at 18–48 is disordered; sequence LAPQQPFLSPWGRPAGTAPGMSGRPFSGREE. An EF-hand 1 domain is found at 225-260; it reads KPHAGFRIAFNMFDTDGNEMVDKKEFLVLQEIFRKK. Ca(2+)-binding residues include Asp238, Asp240, Asn242, Met244, Asp246, and Glu249. Residues 414–429 form the EF-hand 2; degenerate domain; that stretch reads ITFDEFRSFFQFLNNL. The 36-residue stretch at 463–498 folds into the EF-hand 3 domain; the sequence is LSPHLVNTVFKIFDVDKDDQLSYKEFIGIMKDRLHR. Positions 476, 478, 480, 482, and 487 each coordinate Ca(2+).

The protein belongs to the MICU1 family. MICU3 subfamily. Heterodimer; disulfide-linked; heterodimerizes with MICU1. Component of the uniplex complex, composed of MCU, EMRE/SMDT1, MICU1 and MICU3 in a 4:4:1:1 stoichiometry.

The protein localises to the mitochondrion intermembrane space. It is found in the mitochondrion inner membrane. In terms of biological role, tissue-specific calcium sensor of the mitochondrial calcium uniporter (MCU) channel, which specifically regulates MCU channel activity in the central nervous system and skeletal muscle. Senses calcium level via its EF-hand domains: compared to MICU1 and MICU2, MICU3 has a higher affinity for calcium. MICU1 and MICU3 form a disulfide-linked heterodimer that stimulates and inhibits MCU activity, depending on the concentration of calcium. At low calcium levels, MICU1 occludes the pore of the MCU channel, preventing mitochondrial calcium uptake. At higher calcium levels, calcium-binding to MICU1 and MICU3 induces a conformational change that weakens MCU-MICU1 interactions and moves the MICU1-MICU3 heterodimer away from the pore, allowing calcium permeation through the MCU channel. The high calcium affinity of MICU3 lowers the calcium threshold necessary for calcium permeation through the MCU channel. The MICU1-MICU3 heterodimer promotes flexibility of neurotransmission in neuronal cells by enhancing mitochondrial calcium uptake in presynapses. It is also required to increase mitochondrial calcium uptake in skeletal muscle cells, thereby increasing ATP production. The protein is Calcium uptake protein 3, mitochondrial of Rattus norvegicus (Rat).